Reading from the N-terminus, the 233-residue chain is Ribulose-phosphate 3-epimerase (233 aa).

Residue S16 participates in substrate binding. Residues H41, D43, and H74 each contribute to the a divalent metal cation site. Catalysis depends on D43, which acts as the Proton acceptor. Substrate is bound by residues H74, 150–153 (GFCG), 185–187 (DGG), and 207–208 (AS). A divalent metal cation is bound at residue D185. D185 functions as the Proton donor in the catalytic mechanism.

This sequence belongs to the ribulose-phosphate 3-epimerase family. The cofactor is a divalent metal cation.

The enzyme catalyses D-ribulose 5-phosphate = D-xylulose 5-phosphate. The protein operates within carbohydrate degradation. In terms of biological role, catalyzes the reversible epimerization of D-ribulose 5-phosphate to D-xylulose 5-phosphate. The protein is Ribulose-phosphate 3-epimerase of Chlamydia trachomatis serovar D (strain ATCC VR-885 / DSM 19411 / UW-3/Cx).